A 121-amino-acid polypeptide reads, in one-letter code: MSNDDIVSRIASMTALELSDLVGLLEQRFNISRIAPAPCQPGSNAVEAEQDRRDRKVFLTHSGSNKIAVIRAVRDVTKLGLKESKGLVDSAPSLVAEGLSADEAEDIRAKVEAAGAKAEVR.

Belongs to the bacterial ribosomal protein bL12 family. In terms of assembly, homodimer. Part of the ribosomal stalk of the 50S ribosomal subunit. Forms a multimeric L10(L12)X complex, where L10 forms an elongated spine to which 2 to 4 L12 dimers bind in a sequential fashion. Binds GTP-bound translation factors.

Forms part of the ribosomal stalk which helps the ribosome interact with GTP-bound translation factors. Is thus essential for accurate translation. The sequence is that of Large ribosomal subunit protein bL12 from Tremblaya princeps.